The chain runs to 381 residues: Probable serine/threonine-protein kinase PBL21 (381 aa).

Residue C3 is the site of S-palmitoyl cysteine attachment. The Protein kinase domain occupies F78–L354. ATP-binding positions include L84–V92 and K106. D204 serves as the catalytic Proton acceptor. The interval E362–L381 is disordered.

This sequence belongs to the protein kinase superfamily. Ser/Thr protein kinase family. Post-translationally, palmitoylation at Cys-3 and Cys-7 are required for plasma membrane location.

The protein localises to the cell membrane. It catalyses the reaction L-seryl-[protein] + ATP = O-phospho-L-seryl-[protein] + ADP + H(+). The catalysed reaction is L-threonyl-[protein] + ATP = O-phospho-L-threonyl-[protein] + ADP + H(+). May be involved in plant defense signaling. This chain is Probable serine/threonine-protein kinase PBL21, found in Arabidopsis thaliana (Mouse-ear cress).